We begin with the raw amino-acid sequence, 341 residues long: MTYRDAGVDIDAGNALVERIKPLVKRSFRPEVMGGLGGFGALFDLSGKYKEPVLVSGTDGVGTKLKLAQQLGRHDTIGIDLVGMCVNDVLVQGAEPLFFLDYFATGKLDVDTAAAVVGGIARGCELSGCALIGGETAEMPDMYPPGEYDLAGFTVGAVEKSQLLDGAQVRDGDVLIGIASSGPHSNGYSLIRKIYERAGAPAEHVLDDGTKLIDALMAPTALYVKPVLSLLKSHGEAIHAMAHITGGGLTENIIRVIPQGLGLDIDATAWTLPPVFAWLQREGAVADAEMWRTFNCGIGFVLIASLEQAATLEQALDAQSLAHWRIGQVVPAHGDERVRIG.

The protein belongs to the AIR synthase family.

It localises to the cytoplasm. It catalyses the reaction 2-formamido-N(1)-(5-O-phospho-beta-D-ribosyl)acetamidine + ATP = 5-amino-1-(5-phospho-beta-D-ribosyl)imidazole + ADP + phosphate + H(+). It functions in the pathway purine metabolism; IMP biosynthesis via de novo pathway; 5-amino-1-(5-phospho-D-ribosyl)imidazole from N(2)-formyl-N(1)-(5-phospho-D-ribosyl)glycinamide: step 2/2. The chain is Phosphoribosylformylglycinamidine cyclo-ligase from Xanthomonas euvesicatoria pv. vesicatoria (strain 85-10) (Xanthomonas campestris pv. vesicatoria).